We begin with the raw amino-acid sequence, 217 residues long: MAKRLLTAFYGGTFDPIHHGHLQPVIALAQLVNLKQVILLPNHIPLHRPLPKATPQQRLRMTRLAIADTPGKLFVIDERELRRNTPSWTVETFKVLRSEYGPMAPLGLIIGQDSLLTLPQWHRSQELFELCHILVCARPGYQYGIAGYKNNNWMEYRFTDDPSALNYQPAGLVYCAETPELAISASDIRGRVHAILPYYDLLTHSVHAYINKQGLYR.

It belongs to the NadD family.

The catalysed reaction is nicotinate beta-D-ribonucleotide + ATP + H(+) = deamido-NAD(+) + diphosphate. It functions in the pathway cofactor biosynthesis; NAD(+) biosynthesis; deamido-NAD(+) from nicotinate D-ribonucleotide: step 1/1. Its function is as follows. Catalyzes the reversible adenylation of nicotinate mononucleotide (NaMN) to nicotinic acid adenine dinucleotide (NaAD). The chain is Probable nicotinate-nucleotide adenylyltransferase from Baumannia cicadellinicola subsp. Homalodisca coagulata.